We begin with the raw amino-acid sequence, 312 residues long: Translation initiation factor IF3-2, chloroplastic (312 aa).

A chloroplast-targeting transit peptide spans methionine 1–arginine 55. Positions glutamate 253–threonine 263 are enriched in basic and acidic residues. The tract at residues glutamate 253 to serine 312 is disordered. Residues asparagine 272–threonine 282 are compositionally biased toward low complexity. The span at alanine 283–proline 305 shows a compositional bias: acidic residues.

The protein belongs to the IF-3 family. As to quaternary structure, monomer. Highly expressed in young, newly emerged leaves.

It is found in the plastid. It localises to the chloroplast. In terms of biological role, chloroplast translation initiation factor that is essential for the coordination of leaf and chloroplast development. IF-3 binds to the 30S ribosomal subunit and shifts the equilibrium between 70S ribosomes and their 50S and 30S subunits in favor of the free subunits, thus enhancing the availability of 30S subunits on which protein synthesis initiation begins. The protein is Translation initiation factor IF3-2, chloroplastic of Arabidopsis thaliana (Mouse-ear cress).